The primary structure comprises 107 residues: Heme-degrading monooxygenase (107 aa).

The region spanning 2–94 (IIVTNTTKIT…YILDNKIAYY (93 aa)) is the ABM domain. Position 6 (Asn-6) interacts with Fe cation. His-76 is a binding site for heme.

Belongs to the antibiotic biosynthesis monooxygenase family. Heme-degrading monooxygenase IsdG subfamily. Homodimer.

It localises to the cytoplasm. It carries out the reaction heme b + 3 reduced [NADPH--hemoprotein reductase] + 3 O2 = biliverdin IXalpha + CO + Fe(2+) + 3 oxidized [NADPH--hemoprotein reductase] + 3 H2O + H(+). Functionally, allows bacterial pathogens to use the host heme as an iron source. Catalyzes the oxidative degradation of the heme macrocyclic porphyrin ring to the biliverdin in the presence of a suitable electron donor such as ascorbate or NADPH--cytochrome P450 reductase, with subsequent release of free iron. The chain is Heme-degrading monooxygenase from Bacillus mycoides (strain KBAB4) (Bacillus weihenstephanensis).